The chain runs to 205 residues: Proteasome subunit beta type-3 (205 aa).

N-acetylserine is present on Ser-2. N6-acetyllysine is present on Lys-77.

Belongs to the peptidase T1B family. The 26S proteasome consists of a 20S proteasome core and two 19S regulatory subunits. The 20S proteasome core is a barrel-shaped complex made of 28 subunits that are arranged in four stacked rings. The two outer rings are each formed by seven alpha subunits, and the two inner rings are formed by seven beta subunits. The proteolytic activity is exerted by three beta-subunits PSMB5, PSMB6 and PSMB7. As to expression, detected in liver (at protein level).

The protein resides in the cytoplasm. Its subcellular location is the nucleus. Non-catalytic component of the 20S core proteasome complex involved in the proteolytic degradation of most intracellular proteins. This complex plays numerous essential roles within the cell by associating with different regulatory particles. Associated with two 19S regulatory particles, forms the 26S proteasome and thus participates in the ATP-dependent degradation of ubiquitinated proteins. The 26S proteasome plays a key role in the maintenance of protein homeostasis by removing misfolded or damaged proteins that could impair cellular functions, and by removing proteins whose functions are no longer required. Associated with the PA200 or PA28, the 20S proteasome mediates ubiquitin-independent protein degradation. This type of proteolysis is required in several pathways including spermatogenesis (20S-PA200 complex) or generation of a subset of MHC class I-presented antigenic peptides (20S-PA28 complex). The sequence is that of Proteasome subunit beta type-3 (Psmb3) from Mus musculus (Mouse).